A 112-amino-acid chain; its full sequence is Large ribosomal subunit protein eL30 (112 aa).

It belongs to the eukaryotic ribosomal protein eL30 family.

The sequence is that of Large ribosomal subunit protein eL30 (RPL30) from Euphorbia esula (Leafy spurge).